The primary structure comprises 488 residues: BTB/POZ domain-containing protein 1 (488 aa).

The segment covering 1 to 19 (MASLGSAAAGEPATGAEAE) has biased composition (low complexity). Residues 1–42 (MASLGSAAAGEPATGAEAEPGPPAPPPPPPPPPAPSPSALGP) form a disordered region. Positions 20-36 (PGPPAPPPPPPPPPAPS) are enriched in pro residues. Positions 75-151 (SDVRFVLGKG…LYSDEVQIGP (77 aa)) constitute a BTB domain. Arg-85 bears the Omega-N-methylarginine mark. The BACK domain occupies 190 to 290 (LTQARLFDEP…IRFPLMTIEE (101 aa)).

In terms of assembly, interacts (via C-terminus) with TOP1. Interacts with TRIM5 isoform Delta. Interacts with CUL3. In terms of tissue distribution, strongly expressed in heart and skeletal muscle. Weakly expressed in myoblast C2C12 cells, but strongly up-regulated upon their differentiation into myotubes.

The protein resides in the cytoplasm. Its pathway is protein modification; protein ubiquitination. Functionally, probable substrate-specific adapter of an E3 ubiquitin-protein ligase complex which mediates the ubiquitination and subsequent proteasomal degradation of target proteins. Seems to regulate expression levels and/or subnuclear distribution of TOP1, via an unknown mechanism. May play a role in mesenchymal differentiation where it promotes myogenic differentiation and suppresses adipogenesis. In Mus musculus (Mouse), this protein is BTB/POZ domain-containing protein 1 (Btbd1).